The chain runs to 281 residues: Thioesterase PikA5 (281 aa).

Residues arginine 26–aspartate 249 form a thioesterase region. Serine 99 serves as the catalytic Nucleophile; for thioesterase activity. Histidine 233 acts as the Proton acceptor; for thioesterase activity in catalysis.

Belongs to the thioesterase family.

It participates in antibiotic biosynthesis. Involved in the biosynthesis of 12- and 14-membered ring macrolactone antibiotics such as methymycin, neomethymycin, narbomycin and pikromycin. Responsible for removing mis-formed acyl moieties (aberrant decarboxylation) that are bound to the PKS and could block it. Catalyzes the cleavage of methylmalonyl-[acp]. It exhibits some acyl-group specificity, and catalyzes the cleavage of propionyl and butyryl derivatives faster than acetyl malonyl or methylmalonyl derivatives. In Streptomyces venezuelae, this protein is Thioesterase PikA5.